Reading from the N-terminus, the 321-residue chain is Lipoyl synthase (321 aa).

7 residues coordinate [4Fe-4S] cluster: C68, C73, C79, C94, C98, C101, and S308. Residues F80–T297 form the Radical SAM core domain.

It belongs to the radical SAM superfamily. Lipoyl synthase family. Requires [4Fe-4S] cluster as cofactor.

It is found in the cytoplasm. The enzyme catalyses [[Fe-S] cluster scaffold protein carrying a second [4Fe-4S](2+) cluster] + N(6)-octanoyl-L-lysyl-[protein] + 2 oxidized [2Fe-2S]-[ferredoxin] + 2 S-adenosyl-L-methionine + 4 H(+) = [[Fe-S] cluster scaffold protein] + N(6)-[(R)-dihydrolipoyl]-L-lysyl-[protein] + 4 Fe(3+) + 2 hydrogen sulfide + 2 5'-deoxyadenosine + 2 L-methionine + 2 reduced [2Fe-2S]-[ferredoxin]. It participates in protein modification; protein lipoylation via endogenous pathway; protein N(6)-(lipoyl)lysine from octanoyl-[acyl-carrier-protein]: step 2/2. Its function is as follows. Catalyzes the radical-mediated insertion of two sulfur atoms into the C-6 and C-8 positions of the octanoyl moiety bound to the lipoyl domains of lipoate-dependent enzymes, thereby converting the octanoylated domains into lipoylated derivatives. This Shewanella denitrificans (strain OS217 / ATCC BAA-1090 / DSM 15013) protein is Lipoyl synthase.